Consider the following 476-residue polypeptide: Serine/threonine-protein kinase Chk1 (476 aa).

The interaction with CLSPN stretch occupies residues 1–265; sequence MAVPFVEDWD…IPDIKKDRWY (265 aa). The 257-residue stretch at 9 to 265 folds into the Protein kinase domain; the sequence is WDLVQTLGEG…IPDIKKDRWY (257 aa). ATP is bound by residues 15-23 and Lys-38; that span reads LGEGAYGEV. Asp-130 (proton acceptor) is an active-site residue. A Glycyl lysine isopeptide (Lys-Gly) (interchain with G-Cter in ubiquitin) cross-link involves residue Lys-132. The tract at residues 270-327 is disordered; it reads KKGAKRPRVTSGGVSESPSGFSKHIQSNLDFSPVNSASSEENVKYSSSQPEPRTGLSL. Phosphoserine is present on residues Ser-280, Ser-286, Ser-296, and Ser-301. Residues 281–320 are compositionally biased toward polar residues; that stretch reads GGVSESPSGFSKHIQSNLDFSPVNSASSEENVKYSSSQPE. Ser-317 carries the post-translational modification Phosphoserine; by ATM and ATR. Ser-331 is subject to Phosphoserine. Ser-345 is modified (phosphoserine; by ATM and ATR). An autoinhibitory region region spans residues 391–476; the sequence is QCLKETCEKL…SSQKIWLPAT (86 aa). Lys-436 is covalently cross-linked (Glycyl lysine isopeptide (Lys-Gly) (interchain with G-Cter in ubiquitin)). A phosphoserine mark is found at Ser-467 and Ser-468.

Belongs to the protein kinase superfamily. CAMK Ser/Thr protein kinase family. NIM1 subfamily. Interacts (phosphorylated by ATR) with RAD51. Interacts with and phosphorylates CLSPN, an adapter protein that regulates the ATR-dependent phosphorylation of CHEK1. Interacts with BRCA1. Interacts with and phosphorylates CDC25A, CDC25B and CDC25C. Interacts with FBXO6, which regulates CHEK1. Interacts with PPM1D, which regulates CHEK1 through dephosphorylation. Interacts with TIMELESS; DNA damage-dependent. Interacts with FEM1B; activates CHEK1 in response to stress. Interacts with TLK1. Interacts with XPO1 and YWHAZ. Interacts with CDK5RAP3; antagonizes CHEK1. As to quaternary structure, isoform 1 associates with isoform 2, the interaction is disrupted upon phosphorylation by ATR. Post-translationally, phosphorylated by ATR in a RAD17-dependent manner in response to ultraviolet irradiation and inhibition of DNA replication. Phosphorylated by ATM in response to ionizing irradiation. ATM and ATR can both phosphorylate Ser-317 and Ser-345 and this results in enhanced kinase activity. Phosphorylation at Ser-345 induces a change in the conformation of the protein, activates the kinase activity and is a prerequisite for interaction with FBXO6 and subsequent ubiquitination at Lys-436. Phosphorylation at Ser-345 also increases binding to 14-3-3 proteins and promotes nuclear retention. Conversely, dephosphorylation at Ser-345 by PPM1D may contribute to exit from checkpoint mediated cell cycle arrest. Phosphorylation at Ser-280 by AKT1/PKB, may promote mono and/or diubiquitination. Also phosphorylated at undefined residues during mitotic arrest, resulting in decreased activity. In terms of processing, ubiquitinated. Mono or diubiquitination promotes nuclear exclusion. The activated form (phosphorylated on Ser-345) is polyubiquitinated at Lys-436 by some SCF-type E3 ubiquitin ligase complex containing FBXO6 promoting its degradation. Ubiquitination and degradation are required to terminate the checkpoint and ensure that activated CHEK1 does not accumulate as cells progress through S phase, when replication forks encounter transient impediments during normal DNA replication. 'Lys-63'-mediated ubiquitination by TRAF4 at Lys-132 activates cell cycle arrest and activation of DNA repair. Proteolytically cleaved at the C-terminus by SPRTN during normal DNA replication, thereby promoting CHEK1 removal from chromatin and activating the protein kinase activity. Expressed ubiquitously with the most abundant expression in thymus, testis, small intestine and colon.

It is found in the nucleus. The protein resides in the chromosome. Its subcellular location is the cytoplasm. The protein localises to the cytoskeleton. It localises to the microtubule organizing center. It is found in the centrosome. The enzyme catalyses L-seryl-[protein] + ATP = O-phospho-L-seryl-[protein] + ADP + H(+). It carries out the reaction L-threonyl-[protein] + ATP = O-phospho-L-threonyl-[protein] + ADP + H(+). With respect to regulation, activated through phosphorylation predominantly by ATR but also by ATM in response to DNA damage or inhibition of DNA replication. Activation is modulated by several mediators including CLSPN, BRCA1 and FEM1B. Proteolytic cleavage at the C-terminus by SPRTN during normal DNA replication activates the protein kinase activity. Serine/threonine-protein kinase which is required for checkpoint-mediated cell cycle arrest and activation of DNA repair in response to the presence of DNA damage or unreplicated DNA. May also negatively regulate cell cycle progression during unperturbed cell cycles. This regulation is achieved by a number of mechanisms that together help to preserve the integrity of the genome. Recognizes the substrate consensus sequence [R-X-X-S/T]. Binds to and phosphorylates CDC25A, CDC25B and CDC25C. Phosphorylation of CDC25A at 'Ser-178' and 'Thr-507' and phosphorylation of CDC25C at 'Ser-216' creates binding sites for 14-3-3 proteins which inhibit CDC25A and CDC25C. Phosphorylation of CDC25A at 'Ser-76', 'Ser-124', 'Ser-178', 'Ser-279' and 'Ser-293' promotes proteolysis of CDC25A. Phosphorylation of CDC25A at 'Ser-76' primes the protein for subsequent phosphorylation at 'Ser-79', 'Ser-82' and 'Ser-88' by NEK11, which is required for polyubiquitination and degradation of CDCD25A. Inhibition of CDC25 leads to increased inhibitory tyrosine phosphorylation of CDK-cyclin complexes and blocks cell cycle progression. Also phosphorylates NEK6. Binds to and phosphorylates RAD51 at 'Thr-309', which promotes the release of RAD51 from BRCA2 and enhances the association of RAD51 with chromatin, thereby promoting DNA repair by homologous recombination. Phosphorylates multiple sites within the C-terminus of TP53, which promotes activation of TP53 by acetylation and promotes cell cycle arrest and suppression of cellular proliferation. Also promotes repair of DNA cross-links through phosphorylation of FANCE. Binds to and phosphorylates TLK1 at 'Ser-743', which prevents the TLK1-dependent phosphorylation of the chromatin assembly factor ASF1A. This may enhance chromatin assembly both in the presence or absence of DNA damage. May also play a role in replication fork maintenance through regulation of PCNA. May regulate the transcription of genes that regulate cell-cycle progression through the phosphorylation of histones. Phosphorylates histone H3.1 (to form H3T11ph), which leads to epigenetic inhibition of a subset of genes. May also phosphorylate RB1 to promote its interaction with the E2F family of transcription factors and subsequent cell cycle arrest. Phosphorylates SPRTN, promoting SPRTN recruitment to chromatin. Reduces replication stress and activates the G2/M checkpoint, by phosphorylating and inactivating PABIR1/FAM122A and promoting the serine/threonine-protein phosphatase 2A-mediated dephosphorylation and stabilization of WEE1 levels and activity. Its function is as follows. Endogenous repressor of isoform 1, interacts with, and antagonizes CHK1 to promote the S to G2/M phase transition. The sequence is that of Serine/threonine-protein kinase Chk1 (CHEK1) from Homo sapiens (Human).